Reading from the N-terminus, the 159-residue chain is Endoribonuclease YbeY (159 aa).

Residues His-122, His-126, and His-132 each coordinate Zn(2+).

This sequence belongs to the endoribonuclease YbeY family. Zn(2+) serves as cofactor.

Its subcellular location is the cytoplasm. Single strand-specific metallo-endoribonuclease involved in late-stage 70S ribosome quality control and in maturation of the 3' terminus of the 16S rRNA. The sequence is that of Endoribonuclease YbeY from Roseiflexus castenholzii (strain DSM 13941 / HLO8).